The chain runs to 541 residues: Thioredoxin reductase (541 aa).

Residues 51–52 (PG), 71–74 (DYVK), 87–88 (TC), 92–96 (GCVPK), alanine 161, aspartate 357, and 364–366 (ELA) contribute to the FAD site. Cysteine 88 and cysteine 93 are oxidised to a cystine. A loop important for the interaction with TRX1 region spans residues 438-452 (HRQKHIRAQKDEYDL). Residue histidine 509 coordinates FAD. The active-site Proton acceptor is the histidine 509. Cysteines 535 and 540 form a disulfide.

This sequence belongs to the class-I pyridine nucleotide-disulfide oxidoreductase family. In terms of assembly, homodimer. It depends on FAD as a cofactor.

Its subcellular location is the cytoplasm. It carries out the reaction [thioredoxin]-dithiol + NADP(+) = [thioredoxin]-disulfide + NADPH + H(+). Catalyzes the transfer of electrons from NADPH to thioredoxins TRX1, TRX2 and TRX3, which in turn act as reductants of disulfide containing proteins. Able to reduce nitroglutathione (GSNO), a compound involved in the transport of nitric oxide (NO); however, TRX1 is more efficient in reducing GSNO. Has no catalytic activity towards oxidized glutathione (GSSG). The sequence is that of Thioredoxin reductase from Plasmodium falciparum (isolate FCH-5).